A 484-amino-acid polypeptide reads, in one-letter code: tRNA-2-methylthio-N(6)-dimethylallyladenosine synthase (484 aa).

An MTTase N-terminal domain is found at 36–153; sequence GKLYIKTHGC…LPELIRARRE (118 aa). [4Fe-4S] cluster-binding residues include Cys45, Cys82, Cys116, Cys190, Cys194, and Cys197. In terms of domain architecture, Radical SAM core spans 176–415; the sequence is RAEGPSAFVS…HISAHAASIS (240 aa). The TRAM domain occupies 416-479; sequence QSMVGSVQRV…SNSLRGRIQL (64 aa). The disordered stretch occupies residues 428-450; it reads EGPSRRDPNELTGKSENMRPVNF.

Belongs to the methylthiotransferase family. MiaB subfamily. As to quaternary structure, monomer. Requires [4Fe-4S] cluster as cofactor.

Its subcellular location is the cytoplasm. It carries out the reaction N(6)-dimethylallyladenosine(37) in tRNA + (sulfur carrier)-SH + AH2 + 2 S-adenosyl-L-methionine = 2-methylsulfanyl-N(6)-dimethylallyladenosine(37) in tRNA + (sulfur carrier)-H + 5'-deoxyadenosine + L-methionine + A + S-adenosyl-L-homocysteine + 2 H(+). Functionally, catalyzes the methylthiolation of N6-(dimethylallyl)adenosine (i(6)A), leading to the formation of 2-methylthio-N6-(dimethylallyl)adenosine (ms(2)i(6)A) at position 37 in tRNAs that read codons beginning with uridine. This is tRNA-2-methylthio-N(6)-dimethylallyladenosine synthase from Xanthomonas oryzae pv. oryzae (strain MAFF 311018).